Reading from the N-terminus, the 862-residue chain is Alanine--tRNA ligase (862 aa).

His552, His556, Cys653, and His657 together coordinate Zn(2+).

The protein belongs to the class-II aminoacyl-tRNA synthetase family. Requires Zn(2+) as cofactor.

The protein resides in the cytoplasm. It carries out the reaction tRNA(Ala) + L-alanine + ATP = L-alanyl-tRNA(Ala) + AMP + diphosphate. Its function is as follows. Catalyzes the attachment of alanine to tRNA(Ala) in a two-step reaction: alanine is first activated by ATP to form Ala-AMP and then transferred to the acceptor end of tRNA(Ala). Also edits incorrectly charged Ser-tRNA(Ala) and Gly-tRNA(Ala) via its editing domain. The sequence is that of Alanine--tRNA ligase from Nitrosospira multiformis (strain ATCC 25196 / NCIMB 11849 / C 71).